The following is a 338-amino-acid chain: Methionine import ATP-binding protein MetN 2 (338 aa).

The 241-residue stretch at 2–242 (IEIEKVCVDF…PQHAFTQQLV (241 aa)) folds into the ABC transporter domain. 39 to 46 (GTSGAGKS) contacts ATP.

Belongs to the ABC transporter superfamily. Methionine importer (TC 3.A.1.24) family. As to quaternary structure, the complex is composed of two ATP-binding proteins (MetN), two transmembrane proteins (MetI) and a solute-binding protein (MetQ).

It localises to the cell inner membrane. It carries out the reaction L-methionine(out) + ATP + H2O = L-methionine(in) + ADP + phosphate + H(+). The catalysed reaction is D-methionine(out) + ATP + H2O = D-methionine(in) + ADP + phosphate + H(+). In terms of biological role, part of the ABC transporter complex MetNIQ involved in methionine import. Responsible for energy coupling to the transport system. This is Methionine import ATP-binding protein MetN 2 from Salmonella typhi.